We begin with the raw amino-acid sequence, 145 residues long: MDESKKNERLQQLTDIQYNVTQKAGTERPFQNEFYDNEVKGIYVDIVSGKPLFSSNDQYDAGCGWPSFTKPIDEAEVIEHRDLTHGMIRTEVKSADADSHLGHVFPDGPQDKGGLRYCINSAALRFIPVDKLEEEGYQAYKKIFE.

Residues K6 to V129 enclose the MsrB domain. Catalysis depends on C118, which acts as the Nucleophile.

It belongs to the MsrB Met sulfoxide reductase family.

The catalysed reaction is L-methionyl-[protein] + [thioredoxin]-disulfide + H2O = L-methionyl-(R)-S-oxide-[protein] + [thioredoxin]-dithiol. This chain is Peptide methionine sulfoxide reductase MsrB, found in Listeria monocytogenes serovar 1/2a (strain ATCC BAA-679 / EGD-e).